A 257-amino-acid chain; its full sequence is Small ribosomal subunit protein uS3 (257 aa).

The region spanning 40–110 is the KH type-2 domain; that stretch reads IRKYLSTKYK…LVSLKVVEVQ (71 aa). A disordered region spans residues 223–257; sequence ANKEFSRSSKPKKGSFNRSSRSKNTKPAPKQAVSE. The segment covering 231-246 has biased composition (basic residues); that stretch reads SKPKKGSFNRSSRSKN.

The protein belongs to the universal ribosomal protein uS3 family. As to quaternary structure, part of the 30S ribosomal subunit. Forms a tight complex with proteins S10 and S14.

Its function is as follows. Binds the lower part of the 30S subunit head. Binds mRNA in the 70S ribosome, positioning it for translation. The protein is Small ribosomal subunit protein uS3 of Ureaplasma parvum serovar 3 (strain ATCC 27815 / 27 / NCTC 11736).